The following is a 543-amino-acid chain: Periplasmic oligopeptide-binding protein OppA (543 aa).

A signal peptide spans 1 to 26 (MTNITKRSLVAAGVLAALMAGNVALA). A disulfide bond links C297 and C443.

The protein belongs to the bacterial solute-binding protein 5 family. In terms of assembly, the complex is composed of two ATP-binding proteins (OppD and OppF), two transmembrane proteins (OppB and OppC) and a solute-binding protein (OppA).

The protein resides in the periplasm. Its function is as follows. Part of the ABC transporter complex OppABCDF involved in the uptake of oligopeptides. Plays an important nutritional role. Binds peptides containing from two to five amino acid residues. Displays a preference for tripeptides and tetrapeptides over dipeptides and pentapeptides, for peptides composed of L-amino acids and for positively charged peptides. Cannot bind the cell wall peptide L-Ala-D-Gly-gamma-meso-diaminopimelic acid. The chain is Periplasmic oligopeptide-binding protein OppA from Escherichia coli (strain K12).